We begin with the raw amino-acid sequence, 392 residues long: CCA-adding enzyme (392 aa).

Ser-45 and Lys-48 together coordinate ATP. CTP contacts are provided by Ser-45 and Lys-48. Positions 55, 57, and 106 each coordinate Mg(2+). The ATP site is built by His-129, Lys-148, and Tyr-157. CTP contacts are provided by His-129, Lys-148, and Tyr-157.

This sequence belongs to the tRNA nucleotidyltransferase/poly(A) polymerase family. Archaeal CCA-adding enzyme subfamily. As to quaternary structure, homodimer. Mg(2+) serves as cofactor.

The catalysed reaction is a tRNA precursor + 2 CTP + ATP = a tRNA with a 3' CCA end + 3 diphosphate. The enzyme catalyses a tRNA with a 3' CCA end + 2 CTP + ATP = a tRNA with a 3' CCACCA end + 3 diphosphate. Catalyzes the addition and repair of the essential 3'-terminal CCA sequence in tRNAs without using a nucleic acid template. Adds these three nucleotides in the order of C, C, and A to the tRNA nucleotide-73, using CTP and ATP as substrates and producing inorganic pyrophosphate. tRNA 3'-terminal CCA addition is required both for tRNA processing and repair. Also involved in tRNA surveillance by mediating tandem CCA addition to generate a CCACCA at the 3' terminus of unstable tRNAs. While stable tRNAs receive only 3'-terminal CCA, unstable tRNAs are marked with CCACCA and rapidly degraded. This is CCA-adding enzyme from Nanoarchaeum equitans (strain Kin4-M).